We begin with the raw amino-acid sequence, 318 residues long: Pyrroline-5-carboxylate reductase ucsG (318 aa).

It belongs to the pyrroline-5-carboxylate reductase family.

It participates in mycotoxin biosynthesis. In terms of biological role, pyrroline-5-carboxylate reductase; part of the gene cluster that mediates the biosynthesis of UCS1025A, a member of the pyrrolizidinone family that acts as a strong telomerase inhibitor and displays potent antibacterial and antitumor properties. These compounds share a hemiaminal-containing pyrrolizidinone core fused with a gamma-lactone, giving a furopyrrolizidine that is connected to a decalin fragment. The polyketide synthase module (PKS) of the PKS-NRPS ucsA is responsible for the synthesis of the polyketide backbone via the condensation of an acetyl-CoA starter unit with 6 malonyl-CoA units. The downstream nonribosomal peptide synthetase (NRPS) module then amidates the carboxyl end of the polyketide with a 2S,3S-methylproline derived from L-isoleucine by the 2-oxoglutarate-dependent dioxygenase ucsF which converts L-isoleucine to (4S,5S)-4-methylpyrroline-5-carboxylate that is further converted to 2S,3S-methylproline by the pyrroline-5-carboxylate reductase ucsG. Reductive release of the completed aminoacyl polyketide from the assembly line can form the 3-pyrrolin-2-one structure via an intramolecular Knoevenagel reaction. Because ucsA lacks a designated enoylreductase (ER) domain, the required activity is provided the enoyl reductase ucsL. This keto acyclic precursor is the substrate of the Diels-Alderase ucsH, that catalyzes the Diels-Alder cycloaddition. Oxidation of the 3S-methyl group to a carboxylate by the cytochrome P450 monooxygenase ucsK allows an oxa-Michael cyclization that might involve the reductase/dehydrogenase ucsI and which furnishes the furopyrrolizidine. The oxidase ucsJ likely plays a critical role in stereoselective reduction of the C5-C6 double bond to afford the required R-configured carboxylate group. Further enolization and oxidation at C5 by an unidentified enzyme affords the last intermediate that can undergo oxa-Michael cyclization to yield UCS1025A. The protein is Pyrroline-5-carboxylate reductase ucsG of Acremonium sp.